The chain runs to 225 residues: Octanoyltransferase (225 aa).

Residues 31 to 214 (ENTCDEVWLV…ELTTLLDYTD (184 aa)) enclose the BPL/LPL catalytic domain. Residues 70-77 (RGGQVTYH), 137-139 (SLG), and 150-152 (GLA) each bind substrate. Residue Cys-168 is the Acyl-thioester intermediate of the active site.

The protein belongs to the LipB family.

It is found in the cytoplasm. The enzyme catalyses octanoyl-[ACP] + L-lysyl-[protein] = N(6)-octanoyl-L-lysyl-[protein] + holo-[ACP] + H(+). Its pathway is protein modification; protein lipoylation via endogenous pathway; protein N(6)-(lipoyl)lysine from octanoyl-[acyl-carrier-protein]: step 1/2. Its function is as follows. Catalyzes the transfer of endogenously produced octanoic acid from octanoyl-acyl-carrier-protein onto the lipoyl domains of lipoate-dependent enzymes. Lipoyl-ACP can also act as a substrate although octanoyl-ACP is likely to be the physiological substrate. The sequence is that of Octanoyltransferase from Aliivibrio fischeri (strain ATCC 700601 / ES114) (Vibrio fischeri).